We begin with the raw amino-acid sequence, 555 residues long: Connector enhancer of kinase suppressor of ras 3 (555 aa).

An SAM domain is found at 7–72; the sequence is WSPKQVVDWT…LEAVDLLCAL (66 aa). One can recognise a CRIC domain in the interval 80 to 174; that stretch reads TMKNLVLKLR…TAVQKDCLIA (95 aa). The PDZ domain maps to 211–293; sequence EVHLPNVRPG…GVVLLLKKRP (83 aa). Disordered stretches follow at residues 308–333, 362–389, and 518–538; these read RWKP…MDAS, SFGY…SFLD, and PFQE…ASSG. Residues 311–329 are compositionally biased toward low complexity; it reads PPLVQTSPPPTTTQSPEST. The 222-residue stretch at 325–546 folds into the DUF1170 domain; the sequence is SPESTMDASL…SGEPSLLVSW (222 aa). Phosphoserine occurs at positions 381 and 383.

This sequence belongs to the CNKSR family. As to quaternary structure, interacts with epithelial sodium channel ENaC. Interacts directly with SCNN1A (ENaC subunit alpha) and SCNN1B (ENaC subunit beta) C-terminal tails. Interacts with ENaC regulatory proteins NEDD4L, RAF1 and SGK1. As to expression, expressed in kidney.

The protein resides in the cytoplasm. It localises to the apical cell membrane. In terms of biological role, involved in transepithelial sodium transport. Regulates aldosterone-induced and epithelial sodium channel (ENaC)-mediated sodium transport through regulation of ENaC cell surface expression. Acts as a scaffold protein coordinating the assembly of an ENaC-regulatory complex (ERC). This is Connector enhancer of kinase suppressor of ras 3 (Cnksr3) from Mus musculus (Mouse).